Consider the following 254-residue polypeptide: HTH-type transcriptional repressor DasR (254 aa).

Residues 17–87 enclose the HTH gntR-type domain; sequence RTARVPKYYR…QGKGTFVAKP (71 aa). The segment at residues 47–66 is a DNA-binding region (H-T-H motif); it reads ERTLAAEFDTSRTTVRQALQ.

It is found in the cytoplasm. Its activity is regulated as follows. Binding to the target genes is abolished by GlcN6P, a central molecule in N-acetylglucosamine metabolism. Global regulator that is part of the nutrient-sensing system. In the absence of glucosamine 6-P (GlcN6P), represses the phosphotransferase system (PTS) specific for the uptake of N-acetylglucosamine (PTSNag), and genes involved in the metabolism of chitin, as well as several genes involved in development, thereby linking carbon availability to morphogenesis. Also regulates the expression of the ABC transporters DasABC and NgcEFG, which are involved in N,N'-diacetylchitobiose ((GlcNAc)2) uptake. Binds to the DNA consensus sequence 5'-ACTGGTCTAGACCACT-3'. The protein is HTH-type transcriptional repressor DasR (dasR) of Streptomyces coelicolor (strain ATCC BAA-471 / A3(2) / M145).